The chain runs to 618 residues: DNA mismatch repair protein MutL (618 aa).

The segment at 367–402 (EPTTAREPATPRYSGGASGGNGGRQTAGGWPHAQPG) is disordered. Gly residues predominate over residues 382 to 392 (GASGGNGGRQT).

The protein belongs to the DNA mismatch repair MutL/HexB family.

Functionally, this protein is involved in the repair of mismatches in DNA. It is required for dam-dependent methyl-directed DNA mismatch repair. May act as a 'molecular matchmaker', a protein that promotes the formation of a stable complex between two or more DNA-binding proteins in an ATP-dependent manner without itself being part of a final effector complex. The protein is DNA mismatch repair protein MutL of Salmonella paratyphi A (strain ATCC 9150 / SARB42).